A 684-amino-acid chain; its full sequence is 1,4-alpha-glucan-branching enzyme (684 aa).

2 residues coordinate (1,4-alpha-D-glucosyl)n: Trp-88 and Lys-123. Asp-340 (nucleophile) is an active-site residue. Residue Glu-395 is the Proton donor of the active site.

It belongs to the glycosyl hydrolase 13 family. GlgB subfamily.

Its subcellular location is the cytoplasm. It carries out the reaction Transfers a segment of a (1-&gt;4)-alpha-D-glucan chain to a primary hydroxy group in a similar glucan chain.. It functions in the pathway glycan biosynthesis; glycogen biosynthesis. Functionally, glycogen-branching enzyme participates in the glycogen biosynthetic process along with glycogenin and glycogen synthase. Generates alpha-1,6-glucosidic branches from alpha-1,4-linked glucose chains, to increase solubility of the glycogen polymer. The sequence is that of 1,4-alpha-glucan-branching enzyme (be1) from Emericella nidulans (strain FGSC A4 / ATCC 38163 / CBS 112.46 / NRRL 194 / M139) (Aspergillus nidulans).